Here is a 545-residue protein sequence, read N- to C-terminus: CTP synthase (545 aa).

An amidoligase domain region spans residues 1–266; sequence MTTNYIFVTG…DDYICKRFSL (266 aa). Serine 14 serves as a coordination point for CTP. A UTP-binding site is contributed by serine 14. Residues 15 to 20 and aspartate 72 each bind ATP; that span reads SLGKGI. Mg(2+) contacts are provided by aspartate 72 and glutamate 140. CTP-binding positions include 147–149, 187–192, and lysine 223; these read DIE and KTKPTQ. Residues 187–192 and lysine 223 each bind UTP; that span reads KTKPTQ. ATP is bound at residue 239 to 241; the sequence is KDV. A Glutamine amidotransferase type-1 domain is found at 291–542; it reads TIGMVGKYIE…VKAANEHQKR (252 aa). Glycine 352 contacts L-glutamine. Cysteine 379 serves as the catalytic Nucleophile; for glutamine hydrolysis. Residues 380-383, glutamate 403, and arginine 470 contribute to the L-glutamine site; that span reads LGMQ. Active-site residues include histidine 515 and glutamate 517.

This sequence belongs to the CTP synthase family. Homotetramer.

It catalyses the reaction UTP + L-glutamine + ATP + H2O = CTP + L-glutamate + ADP + phosphate + 2 H(+). It carries out the reaction L-glutamine + H2O = L-glutamate + NH4(+). The catalysed reaction is UTP + NH4(+) + ATP = CTP + ADP + phosphate + 2 H(+). Its pathway is pyrimidine metabolism; CTP biosynthesis via de novo pathway; CTP from UDP: step 2/2. With respect to regulation, allosterically activated by GTP, when glutamine is the substrate; GTP has no effect on the reaction when ammonia is the substrate. The allosteric effector GTP functions by stabilizing the protein conformation that binds the tetrahedral intermediate(s) formed during glutamine hydrolysis. Inhibited by the product CTP, via allosteric rather than competitive inhibition. Functionally, catalyzes the ATP-dependent amination of UTP to CTP with either L-glutamine or ammonia as the source of nitrogen. Regulates intracellular CTP levels through interactions with the four ribonucleotide triphosphates. The protein is CTP synthase of Salmonella newport (strain SL254).